Here is a 425-residue protein sequence, read N- to C-terminus: Serine--tRNA ligase (425 aa).

233-235 (TAE) contributes to the L-serine binding site. 264–266 (RAE) contributes to the ATP binding site. E287 serves as a coordination point for L-serine. 351–354 (EISS) lines the ATP pocket. S387 is an L-serine binding site.

The protein belongs to the class-II aminoacyl-tRNA synthetase family. Type-1 seryl-tRNA synthetase subfamily. In terms of assembly, homodimer. The tRNA molecule binds across the dimer.

It is found in the cytoplasm. The enzyme catalyses tRNA(Ser) + L-serine + ATP = L-seryl-tRNA(Ser) + AMP + diphosphate + H(+). It carries out the reaction tRNA(Sec) + L-serine + ATP = L-seryl-tRNA(Sec) + AMP + diphosphate + H(+). Its pathway is aminoacyl-tRNA biosynthesis; selenocysteinyl-tRNA(Sec) biosynthesis; L-seryl-tRNA(Sec) from L-serine and tRNA(Sec): step 1/1. Functionally, catalyzes the attachment of serine to tRNA(Ser). Is also able to aminoacylate tRNA(Sec) with serine, to form the misacylated tRNA L-seryl-tRNA(Sec), which will be further converted into selenocysteinyl-tRNA(Sec). This is Serine--tRNA ligase from Clostridium perfringens (strain SM101 / Type A).